The following is a 932-amino-acid chain: Probable UDP-N-acetylglucosamine--peptide N-acetylglucosaminyltransferase SPINDLY (932 aa).

Positions 1–15 (MAWTEKDVENGKESD) are enriched in basic and acidic residues. A disordered region spans residues 1-39 (MAWTEKDVENGKESDSLGNNGFLKGVQSSSDSKGSPVRI). 11 TPR repeats span residues 48 to 81 (GKDA…DSGS), 82 to 115 (IESL…DPQN), 116 to 149 (ACAL…DPSY), 157 to 190 (AIVL…DSHY), 191 to 224 (APAY…RPMY), 225 to 258 (AEAY…SPNF), 266 to 299 (AIAL…NWHY), 300 to 333 (ADAM…NPHC), 334 to 367 (AEAC…KPNF), 369 to 401 (QSLN…NPTY), and 402 to 435 (AEAY…DPDS). A catalytic region region spans residues 436 to 932 (RNAGQNRLLA…NQAGNPGKQS (497 aa)). The disordered stretch occupies residues 881 to 902 (VSPIEKTRISASKDGPIKENGF).

It belongs to the glycosyltransferase 41 family. O-GlcNAc transferase subfamily. In terms of tissue distribution, expressed in stems, leaves and flowers. Expressed during all stages of corolla maturation.

The protein localises to the nucleus. The catalysed reaction is L-seryl-[protein] + UDP-N-acetyl-alpha-D-glucosamine = 3-O-(N-acetyl-beta-D-glucosaminyl)-L-seryl-[protein] + UDP + H(+). It catalyses the reaction L-threonyl-[protein] + UDP-N-acetyl-alpha-D-glucosamine = 3-O-(N-acetyl-beta-D-glucosaminyl)-L-threonyl-[protein] + UDP + H(+). The protein operates within protein modification; protein glycosylation. Functionally, probable O-linked N-acetylglucosamine transferase (OGT) involved in various processes such as gibberellin (GA) signaling pathway. OGTs catalyze the addition of nucleotide-activated sugars directly onto the polypeptide through O-glycosidic linkage with the hydroxyl of serine or threonine. Probably acts by adding O-linked sugars to yet unknown proteins. This Petunia hybrida (Petunia) protein is Probable UDP-N-acetylglucosamine--peptide N-acetylglucosaminyltransferase SPINDLY (SPY).